Consider the following 438-residue polypeptide: Protein phosphatase 2C homolog 2 (438 aa).

Residues 23 to 294 (IYGVSAMQGW…DNMTMVIIGF (272 aa)) enclose the PPM-type phosphatase domain. Mn(2+)-binding residues include D67, G68, D236, and D285. A disordered region spans residues 370–438 (VLTGSDDTEM…EKTPEESKKD (69 aa)). Over residues 375-387 (DDTEMFDNADEDK) the composition is skewed to acidic residues. A compositionally biased stretch (basic and acidic residues) spans 398 to 438 (GKTDAKEETEAKPAPEAESSKPADGSEKKQDEKTPEESKKD).

Belongs to the PP2C family. It depends on Mg(2+) as a cofactor. Requires Mn(2+) as cofactor.

It is found in the cytoplasm. The protein localises to the nucleus. It catalyses the reaction O-phospho-L-seryl-[protein] + H2O = L-seryl-[protein] + phosphate. It carries out the reaction O-phospho-L-threonyl-[protein] + H2O = L-threonyl-[protein] + phosphate. Its function is as follows. Dephosphorylating regulator for many key proteins. Negatively regulates the endoplasmic reticulum unfolded protein response. The chain is Protein phosphatase 2C homolog 2 from Hypocrea jecorina (strain QM6a) (Trichoderma reesei).